A 210-amino-acid chain; its full sequence is MSSIKSLTTRQQEVFDLIKRHIESTGMPPTRVEISKELGFRSPNAAEEHLKALARKGVIEIVSGVSRGIRLLTDIEEPENEGLPLIGRVAAGEPILAEQHIEATYQVDANMFKPQADFLLKVYGQSMKDIGILDGDLLAVHSTKDIRNGQIVVARIEDEVTVKRFERKGSVVYLHAENEEFEPIVVDLTQQPYFEIEGIAVGIIRNNAWM.

The H-T-H motif DNA-binding region spans 31-51 (RVEISKELGFRSPNAAEEHLK). Residues Ser-126 and Lys-163 each act as for autocatalytic cleavage activity in the active site.

The protein belongs to the peptidase S24 family. As to quaternary structure, homodimer.

The catalysed reaction is Hydrolysis of Ala-|-Gly bond in repressor LexA.. Its function is as follows. Represses a number of genes involved in the response to DNA damage (SOS response), including recA and lexA. In the presence of single-stranded DNA, RecA interacts with LexA causing an autocatalytic cleavage which disrupts the DNA-binding part of LexA, leading to derepression of the SOS regulon and eventually DNA repair. The protein is LexA repressor of Histophilus somni (strain 129Pt) (Haemophilus somnus).